A 410-amino-acid polypeptide reads, in one-letter code: Arginine deiminase (410 aa).

The active-site Amidino-cysteine intermediate is the Cys-398.

The protein belongs to the arginine deiminase family.

The protein resides in the cytoplasm. The catalysed reaction is L-arginine + H2O = L-citrulline + NH4(+). It participates in amino-acid degradation; L-arginine degradation via ADI pathway; carbamoyl phosphate from L-arginine: step 1/2. The sequence is that of Arginine deiminase from Limosilactobacillus reuteri (strain DSM 20016) (Lactobacillus reuteri).